Reading from the N-terminus, the 338-residue chain is Methionyl-tRNA formyltransferase (338 aa).

110-113 lines the (6S)-5,6,7,8-tetrahydrofolate pocket; sequence SLLP.

Belongs to the Fmt family.

The enzyme catalyses L-methionyl-tRNA(fMet) + (6R)-10-formyltetrahydrofolate = N-formyl-L-methionyl-tRNA(fMet) + (6S)-5,6,7,8-tetrahydrofolate + H(+). Attaches a formyl group to the free amino group of methionyl-tRNA(fMet). The formyl group appears to play a dual role in the initiator identity of N-formylmethionyl-tRNA by promoting its recognition by IF2 and preventing the misappropriation of this tRNA by the elongation apparatus. The sequence is that of Methionyl-tRNA formyltransferase from Parasynechococcus marenigrum (strain WH8102).